Reading from the N-terminus, the 570-residue chain is Proline--tRNA ligase (570 aa).

The protein belongs to the class-II aminoacyl-tRNA synthetase family. ProS type 1 subfamily. As to quaternary structure, homodimer.

It is found in the cytoplasm. It catalyses the reaction tRNA(Pro) + L-proline + ATP = L-prolyl-tRNA(Pro) + AMP + diphosphate. Its function is as follows. Catalyzes the attachment of proline to tRNA(Pro) in a two-step reaction: proline is first activated by ATP to form Pro-AMP and then transferred to the acceptor end of tRNA(Pro). As ProRS can inadvertently accommodate and process non-cognate amino acids such as alanine and cysteine, to avoid such errors it has two additional distinct editing activities against alanine. One activity is designated as 'pretransfer' editing and involves the tRNA(Pro)-independent hydrolysis of activated Ala-AMP. The other activity is designated 'posttransfer' editing and involves deacylation of mischarged Ala-tRNA(Pro). The misacylated Cys-tRNA(Pro) is not edited by ProRS. This chain is Proline--tRNA ligase, found in Acidithiobacillus ferrooxidans (strain ATCC 23270 / DSM 14882 / CIP 104768 / NCIMB 8455) (Ferrobacillus ferrooxidans (strain ATCC 23270)).